The primary structure comprises 418 residues: Glucose-1-phosphate adenylyltransferase (418 aa).

Alpha-D-glucose 1-phosphate contacts are provided by residues Tyr107, Gly172, 187 to 188 (EK), and Ser205.

This sequence belongs to the bacterial/plant glucose-1-phosphate adenylyltransferase family. In terms of assembly, homotetramer.

The catalysed reaction is alpha-D-glucose 1-phosphate + ATP + H(+) = ADP-alpha-D-glucose + diphosphate. It functions in the pathway glycan biosynthesis; glycogen biosynthesis. In terms of biological role, involved in the biosynthesis of ADP-glucose, a building block required for the elongation reactions to produce glycogen. Catalyzes the reaction between ATP and alpha-D-glucose 1-phosphate (G1P) to produce pyrophosphate and ADP-Glc. This Gemmatimonas aurantiaca (strain DSM 14586 / JCM 11422 / NBRC 100505 / T-27) protein is Glucose-1-phosphate adenylyltransferase.